A 236-amino-acid polypeptide reads, in one-letter code: 7-cyano-7-deazaguanine synthase (236 aa).

7–17 (CSGGLDSVSLA) lines the ATP pocket. Residues C185, C193, C196, and C199 each coordinate Zn(2+).

The protein belongs to the QueC family. Zn(2+) is required as a cofactor.

It carries out the reaction 7-carboxy-7-deazaguanine + NH4(+) + ATP = 7-cyano-7-deazaguanine + ADP + phosphate + H2O + H(+). It participates in purine metabolism; 7-cyano-7-deazaguanine biosynthesis. Its function is as follows. Catalyzes the ATP-dependent conversion of 7-carboxy-7-deazaguanine (CDG) to 7-cyano-7-deazaguanine (preQ(0)). This is 7-cyano-7-deazaguanine synthase from Rhizobium leguminosarum bv. trifolii (strain WSM2304).